Reading from the N-terminus, the 260-residue chain is 1-(5-phosphoribosyl)-5-[(5-phosphoribosylamino)methylideneamino] imidazole-4-carboxamide isomerase (260 aa).

Asp-8 functions as the Proton acceptor in the catalytic mechanism. Asp-130 serves as the catalytic Proton donor.

It belongs to the HisA/HisF family.

It is found in the cytoplasm. The enzyme catalyses 1-(5-phospho-beta-D-ribosyl)-5-[(5-phospho-beta-D-ribosylamino)methylideneamino]imidazole-4-carboxamide = 5-[(5-phospho-1-deoxy-D-ribulos-1-ylimino)methylamino]-1-(5-phospho-beta-D-ribosyl)imidazole-4-carboxamide. It functions in the pathway amino-acid biosynthesis; L-histidine biosynthesis; L-histidine from 5-phospho-alpha-D-ribose 1-diphosphate: step 4/9. The chain is 1-(5-phosphoribosyl)-5-[(5-phosphoribosylamino)methylideneamino] imidazole-4-carboxamide isomerase from Chlorobaculum parvum (strain DSM 263 / NCIMB 8327) (Chlorobium vibrioforme subsp. thiosulfatophilum).